Consider the following 365-residue polypeptide: tRNA-specific 2-thiouridylase MnmA (365 aa).

ATP-binding positions include 14–21 (AMSGGVDS) and Leu-40. Cys-108 acts as the Nucleophile in catalysis. Cysteines 108 and 204 form a disulfide. Residue Gly-132 participates in ATP binding. The interval 154–156 (KDQ) is interaction with tRNA. The active-site Cysteine persulfide intermediate is the Cys-204.

This sequence belongs to the MnmA/TRMU family.

It is found in the cytoplasm. It catalyses the reaction S-sulfanyl-L-cysteinyl-[protein] + uridine(34) in tRNA + AH2 + ATP = 2-thiouridine(34) in tRNA + L-cysteinyl-[protein] + A + AMP + diphosphate + H(+). Catalyzes the 2-thiolation of uridine at the wobble position (U34) of tRNA, leading to the formation of s(2)U34. This chain is tRNA-specific 2-thiouridylase MnmA, found in Rickettsia rickettsii (strain Iowa).